Reading from the N-terminus, the 371-residue chain is Bifunctional enzyme IspD/IspF (371 aa).

Residues 1–210 are 2-C-methyl-D-erythritol 4-phosphate cytidylyltransferase; it reads MSEISLIMLA…LDLPTPSFEI (210 aa). The tract at residues 211–371 is 2-C-methyl-D-erythritol 2,4-cyclodiphosphate synthase; sequence FTGNGFDVHE…NLKYFDWTRL (161 aa). Residues Asp217 and His219 each contribute to the a divalent metal cation site. Residues 217 to 219 and 243 to 244 each bind 4-CDP-2-C-methyl-D-erythritol 2-phosphate; these read DVH and HS. Residue His251 coordinates a divalent metal cation. 4-CDP-2-C-methyl-D-erythritol 2-phosphate is bound by residues 265–267, 270–274, 341–344, Phe348, and Arg351; these read DIG, YPDTD, and TTTE.

It in the N-terminal section; belongs to the IspD/TarI cytidylyltransferase family. IspD subfamily. The protein in the C-terminal section; belongs to the IspF family. A divalent metal cation is required as a cofactor.

The enzyme catalyses 2-C-methyl-D-erythritol 4-phosphate + CTP + H(+) = 4-CDP-2-C-methyl-D-erythritol + diphosphate. The catalysed reaction is 4-CDP-2-C-methyl-D-erythritol 2-phosphate = 2-C-methyl-D-erythritol 2,4-cyclic diphosphate + CMP. The protein operates within isoprenoid biosynthesis; isopentenyl diphosphate biosynthesis via DXP pathway; isopentenyl diphosphate from 1-deoxy-D-xylulose 5-phosphate: step 2/6. It participates in isoprenoid biosynthesis; isopentenyl diphosphate biosynthesis via DXP pathway; isopentenyl diphosphate from 1-deoxy-D-xylulose 5-phosphate: step 4/6. Bifunctional enzyme that catalyzes the formation of 4-diphosphocytidyl-2-C-methyl-D-erythritol from CTP and 2-C-methyl-D-erythritol 4-phosphate (MEP) (IspD), and catalyzes the conversion of 4-diphosphocytidyl-2-C-methyl-D-erythritol 2-phosphate (CDP-ME2P) to 2-C-methyl-D-erythritol 2,4-cyclodiphosphate (ME-CPP) with a corresponding release of cytidine 5-monophosphate (CMP) (IspF). The chain is Bifunctional enzyme IspD/IspF from Campylobacter jejuni subsp. jejuni serotype O:23/36 (strain 81-176).